The primary structure comprises 252 residues: 3-dehydroquinate dehydratase (252 aa).

Residues serine 21, 46–48 (EWR), and arginine 82 each bind 3-dehydroquinate. Histidine 143 acts as the Proton donor/acceptor in catalysis. The active-site Schiff-base intermediate with substrate is lysine 170. Arginine 213, serine 232, and glutamine 236 together coordinate 3-dehydroquinate.

It belongs to the type-I 3-dehydroquinase family. In terms of assembly, homodimer.

It carries out the reaction 3-dehydroquinate = 3-dehydroshikimate + H2O. It functions in the pathway metabolic intermediate biosynthesis; chorismate biosynthesis; chorismate from D-erythrose 4-phosphate and phosphoenolpyruvate: step 3/7. Involved in the third step of the chorismate pathway, which leads to the biosynthesis of aromatic amino acids. Catalyzes the cis-dehydration of 3-dehydroquinate (DHQ) and introduces the first double bond of the aromatic ring to yield 3-dehydroshikimate. The chain is 3-dehydroquinate dehydratase from Shigella dysenteriae serotype 1 (strain Sd197).